A 463-amino-acid chain; its full sequence is Argininosuccinate lyase (463 aa).

Belongs to the lyase 1 family. Argininosuccinate lyase subfamily.

The protein resides in the cytoplasm. The enzyme catalyses 2-(N(omega)-L-arginino)succinate = fumarate + L-arginine. Its pathway is amino-acid biosynthesis; L-arginine biosynthesis; L-arginine from L-ornithine and carbamoyl phosphate: step 3/3. This chain is Argininosuccinate lyase, found in Streptococcus pneumoniae (strain JJA).